We begin with the raw amino-acid sequence, 397 residues long: G2/mitotic-specific cyclin-B1 (397 aa).

Residues 1–17 are compositionally biased toward polar residues; it reads MALRVTRNTRLASSENQ. A disordered region spans residues 1 to 30; that stretch reads MALRVTRNTRLASSENQGALPGKAAVANKP.

Belongs to the cyclin family. Cyclin AB subfamily. In terms of assembly, interacts with the CDK1 protein kinase to form a serine/threonine kinase holoenzyme complex also known as maturation promoting factor (MPF). The cyclin subunit imparts substrate specificity to the complex.

Its function is as follows. Essential for the control of the cell cycle at the G2/M (mitosis) transition. The polypeptide is G2/mitotic-specific cyclin-B1 (ccnb1) (Carassius auratus (Goldfish)).